A 556-amino-acid chain; its full sequence is Zinc finger protein GLI1 (556 aa).

Disordered stretches follow at residues 57-83 (TEHP…KKRA), 133-178 (SLGY…TPAR), and 200-222 (KYPE…QDPL). Over residues 135-148 (GYQNPPGQQKGQGQ) the composition is skewed to low complexity. C2H2-type zinc fingers lie at residues 247-272 (TNCY…NNEH), 280-307 (FVCH…MRRH), 313-337 (HKCT…LRSH), 343-368 (YVCE…NRTH), and 374-399 (YICK…KTVH). The interaction with DNA stretch occupies residues 295–303 (KAQYMLVVH). 2 interaction with DNA regions span residues 357-362 (ASDRAK) and 387-393 (DPSSLRK). The disordered stretch occupies residues 387-492 (DPSSLRKHVK…VEMTGNTGGS (106 aa)). Residues 454–472 (SKPQPSPGGQSSCSSDRSP) are compositionally biased toward low complexity.

Belongs to the GLI C2H2-type zinc-finger protein family.

Its subcellular location is the cytoplasm. It localises to the nucleus. Acts as a transcriptional activator. Binds to the DNA consensus sequence 5'-GACCACCCA-3'. May regulate the transcription of specific genes during normal development. May play a role in craniofacial development and digital development, as well as development of the central nervous system and gastrointestinal tract. Mediates SHH signaling. Plays a role in cell proliferation and differentiation via its role in SHH signaling. The polypeptide is Zinc finger protein GLI1 (GLI1) (Gallus gallus (Chicken)).